A 145-amino-acid polypeptide reads, in one-letter code: Superoxide dismutase [Mn/Fe] (145 aa).

Histidine 10 and histidine 64 together coordinate Fe(3+). Residues histidine 10 and histidine 64 each contribute to the Mn(2+) site.

Belongs to the iron/manganese superoxide dismutase family. It depends on Mn(2+) as a cofactor. Fe(3+) serves as cofactor.

It carries out the reaction 2 superoxide + 2 H(+) = H2O2 + O2. In terms of biological role, destroys superoxide anion radicals which are normally produced within the cells and which are toxic to biological systems. Catalyzes the dismutation of superoxide anion radicals into O2 and H2O2 by successive reduction and oxidation of the transition metal ion at the active site. The chain is Superoxide dismutase [Mn/Fe] (sodA) from Streptococcus alactolyticus.